A 100-amino-acid chain; its full sequence is Putative antiporter subunit mnhF2 (100 aa).

3 helical membrane passes run 5 to 25 (ITHI…IICL), 38 to 60 (VVTF…VLMG), and 70 to 92 (LIAI…GHVF).

It belongs to the CPA3 antiporters (TC 2.A.63) subunit F family. As to quaternary structure, may form a heterooligomeric complex that consists of seven subunits: mnhA2, mnhB2, mnhC2, mnhD2, mnhE2, mnhF2 and mnhG2.

It is found in the cell membrane. In Staphylococcus aureus (strain USA300), this protein is Putative antiporter subunit mnhF2 (mnhF2).